The sequence spans 282 residues: Shikimate dehydrogenase (NADP(+)) (282 aa).

Residues 15–17 (SKS) and Thr-62 each bind shikimate. The active-site Proton acceptor is Lys-66. Shikimate contacts are provided by Asn-87 and Asp-103. NADP(+) is bound by residues 127-131 (GAGGA), 151-156 (NRTHTK), and Met-220. A shikimate-binding site is contributed by Tyr-222. Position 244 (Gly-244) interacts with NADP(+).

This sequence belongs to the shikimate dehydrogenase family. As to quaternary structure, homodimer.

It carries out the reaction shikimate + NADP(+) = 3-dehydroshikimate + NADPH + H(+). It functions in the pathway metabolic intermediate biosynthesis; chorismate biosynthesis; chorismate from D-erythrose 4-phosphate and phosphoenolpyruvate: step 4/7. Functionally, involved in the biosynthesis of the chorismate, which leads to the biosynthesis of aromatic amino acids. Catalyzes the reversible NADPH linked reduction of 3-dehydroshikimate (DHSA) to yield shikimate (SA). This is Shikimate dehydrogenase (NADP(+)) from Shewanella baltica (strain OS155 / ATCC BAA-1091).